The sequence spans 807 residues: uncharacterized protein (807 aa).

It belongs to the IIV-6 155L family.

This is an uncharacterized protein from Aedes vexans (Inland floodwater mosquito).